We begin with the raw amino-acid sequence, 1275 residues long: Streptococcal hemoprotein receptor (1275 aa).

A signal peptide spans 1-26; that stretch reads MKKISKCAFVAISALVLIQATQTVKS. The tract at residues 61–123 is HID 1; the sequence is GKEYYKHIEK…KKDGDILITF (63 aa). T87, R196, Y197, and M238 together coordinate heme. The HID 2 stretch occupies residues 203 to 269; that stretch reads IKALTQQITK…KGFEDVTITV (67 aa). The NEAT 1 domain occupies 369-501; the sequence is LTEGTYTLNF…DMTFSKTVTK (133 aa). 11 LRR repeats span residues 544–567, 568–590, 592–614, 616–638, 639–662, 664–686, 687–710, 712–733, 734–757, 759–781, and 783–804; these read LEQIRGELRLDHYELTDISLLKHA, KNITELHLDGNQITEIPKELFSQ, KQLRFLNLRSNHLTYLDKDTFKS, AQLRELYLSSNFIHSLEGGLFQS, LHHLEQLDLSKNRIGRLCDNPFEG, SRLTSLGFAENSLEEIPEKALEP, LTSLNFIDLSQNNLALLPKTIEKL, ALSTIVASRNHITRIDNISFKN, LPKLSVLDLSTNEISNLPNGIFKQ, NQLTKLDFFNNLLTQVEESVFPD, and ETLNLDVKFNQIKSVSPKVRAL. Positions 976–1138 constitute an NEAT 2 domain; that stretch reads LRDGIYYLNA…TTEKAKVVKE (163 aa). Disordered stretches follow at residues 1137-1174, 1186-1205, and 1210-1248; these read KETNNPQENSHLTSTDQLKGPQNRQQEKTPTSPPSAAT, KATGQSTQETSKTDDTDKAE, and LVRDHQTSIEGKTAKDTKTKKSDKKHRSNQQSNGEESSS. The segment covering 1138–1166 has biased composition (polar residues); the sequence is ETNNPQENSHLTSTDQLKGPQNRQQEKTP. 2 stretches are compositionally biased toward basic and acidic residues: residues 1196–1205 and 1210–1229; these read SKTDDTDKAE and LVRDHQTSIEGKTAKDTKTK. Residues 1250-1269 traverse the membrane as a helical segment; it reads YHLIAGLSSFMIVALGFIIG.

The protein localises to the cell membrane. Its activity is regulated as follows. May modulate heme uptake according to heme availability. In the presence of high heme concentrations, NEAT 1 facilitates fast heme delivery to Shp, whereas NEAT 2 serves as a temporary storage for heme on the bacterial surface. When heme availability is limiting, heme from NEAT 2 is transferred back to NEAT 1 and from there to Shp. In terms of biological role, hemoprotein receptor that plays a central role in the acquisition of host heme, a source of iron during bacterial infection, and is therefore an important virulence factor. Captures host hemoproteins and their iron-containing heme molecules, and transfers the heme to the cell surface heme-binding protein Shp. Plays a pivotal role in iron acquisition and growth under iron-starvation conditions. Uses a cap and release mechanism in which Shr forms a dynamic complex with hemoglobin that enables the gated release of its most labile heme molecule. This mechanism exploits the hemoglobin beta subunit's inherent weaker affinity for heme, allowing S.pyogenes to preferentially capture only heme-saturated forms of hemoglobin that contain iron. In vitro, binds directly to a variety of heme-containing proteins, including hemoglobin, myoglobin, heme albumin and the hemoglobin-haptoglobin complex. It also binds to and acquires heme from methemoglobin, the ferric form of hemoglobin, which is likely to be a physiologically relevant heme source for the hemolytic group A streptococcus (GAS). Seems to have an inherent ability to reduce the ferric heme present in methemoglobin to ferrous heme and to provide a stable environment for the produced ferrous complex. Does not bind apohemoglobin, apohaptoglobin, fibrinogen or streptavidin, indicating that it specifically recognizes hemoproteins. Its function is as follows. In addition to its role in heme acquisition, functions as an adhesin, contributing to host cell adhesion and hence virulence. Specifically binds to extracellular matrix (ECM) components, including fibronectin and laminin, and mediates bacterial attachment to host epithelial cells. The protein is Streptococcal hemoprotein receptor of Streptococcus pyogenes serotype M1.